Consider the following 233-residue polypeptide: uncharacterized protein (233 aa).

7 residues coordinate Zn(2+): His64, His66, Asp68, His69, His143, Asp162, and His212.

It belongs to the metallo-beta-lactamase superfamily. Glyoxalase II family. Requires Zn(2+) as cofactor.

This is an uncharacterized protein from Bacillus subtilis (strain 168).